The sequence spans 444 residues: Glutamate-1-semialdehyde 2,1-aminomutase (444 aa).

Position 267 is an N6-(pyridoxal phosphate)lysine (K267).

The protein belongs to the class-III pyridoxal-phosphate-dependent aminotransferase family. HemL subfamily. Homodimer. Requires pyridoxal 5'-phosphate as cofactor.

It is found in the cytoplasm. It catalyses the reaction (S)-4-amino-5-oxopentanoate = 5-aminolevulinate. The protein operates within porphyrin-containing compound metabolism; protoporphyrin-IX biosynthesis; 5-aminolevulinate from L-glutamyl-tRNA(Glu): step 2/2. The protein is Glutamate-1-semialdehyde 2,1-aminomutase of Xylella fastidiosa (strain M12).